The sequence spans 332 residues: Geranylgeranyl pyrophosphate synthase 2 (332 aa).

Isopentenyl diphosphate-binding residues include lysine 55, arginine 58, and histidine 87. Mg(2+)-binding residues include aspartate 94 and aspartate 98. Residue arginine 103 participates in dimethylallyl diphosphate binding. Arginine 104 is a binding site for isopentenyl diphosphate. Positions 181, 182, and 218 each coordinate dimethylallyl diphosphate. Aspartate 221 is a Mg(2+) binding site. Dimethylallyl diphosphate contacts are provided by asparagine 225, lysine 235, and lysine 245.

It belongs to the FPP/GGPP synthase family. Mg(2+) is required as a cofactor.

The catalysed reaction is isopentenyl diphosphate + dimethylallyl diphosphate = (2E)-geranyl diphosphate + diphosphate. The enzyme catalyses isopentenyl diphosphate + (2E)-geranyl diphosphate = (2E,6E)-farnesyl diphosphate + diphosphate. It catalyses the reaction isopentenyl diphosphate + (2E,6E)-farnesyl diphosphate = (2E,6E,10E)-geranylgeranyl diphosphate + diphosphate. Functionally, geranylgeranyl pyrophosphate synthase; part of the gene cluster 3 that mediates the biosynthesis of an isoprenoid secondary metabolite. This chain is Geranylgeranyl pyrophosphate synthase 2 (GGS2), found in Zymoseptoria tritici (strain CBS 115943 / IPO323) (Speckled leaf blotch fungus).